A 412-amino-acid polypeptide reads, in one-letter code: Putative competence-damage inducible protein (412 aa).

The protein belongs to the CinA family.

This Caldanaerobacter subterraneus subsp. tengcongensis (strain DSM 15242 / JCM 11007 / NBRC 100824 / MB4) (Thermoanaerobacter tengcongensis) protein is Putative competence-damage inducible protein.